Reading from the N-terminus, the 182-residue chain is Large ribosomal subunit protein uL16 (182 aa).

Belongs to the universal ribosomal protein uL16 family.

The chain is Large ribosomal subunit protein uL16 from Pyrobaculum islandicum (strain DSM 4184 / JCM 9189 / GEO3).